Here is a 604-residue protein sequence, read N- to C-terminus: MIPSGLVYLLYPLGFLASLFFGSAFSIQWWLSKKRKEVYAPRSFWILSSIGATLMIVHGTIQSQFPVTVLHVINLIIYLRNLNITSSRPISFRATLVLMALSVVFVTLPFLYVNMEWMASPNIFHLPLPPAQLSWHLIGCLGLAIFSGRFLIQWFYIESNNTKDFPLLFWKIGLLGGLLALVYFIRIGDPINILCYGCGLFPSIANLRLFYKEQRSTPYLDTHCFLSAGEASGDILGGKLIQSIKSLYPNIRFWGVGGPAMRQEGLQPILNMEEFQVSGFAEVLGSLFRLYRNYRKILKTILKHKPATLIFIDFPDFHLLLIKKLRKHGYRGKIIHYVCPSIWAWRPKRKRILEQHLDMLLLILPFEEGLFKNTSLETVYLGHPLVEEISDYKEQASWKEKFLNSDRPIVAAFPGSRRGDISRNLRIQVQAFLNSSLSQTHQFVVSSSSAKYDEIIEDTLKAEGCQHSQIIPMNFRYELMRSCDCALAKCGTIVLETALNQTPTIVMCRLRPFDTFLAKYIFKILLPAYSLPNIIMNSVIFPEFIGGKKDFHPEEIATALDLLNQHGSKEKQKEDCRKLCKVMTTGQIASEEFLKRIFDTLPAV.

The segment at 1 to 220 (MIPSGLVYLL…YKEQRSTPYL (220 aa)) is unknown. The tract at residues 221–604 (DTHCFLSAGE…KRIFDTLPAV (384 aa)) is lipid-A-disaccharide synthase.

It in the C-terminal section; belongs to the LpxB family.

It carries out the reaction a lipid X + a UDP-2-N,3-O-bis[(3R)-3-hydroxyacyl]-alpha-D-glucosamine = a lipid A disaccharide + UDP + H(+). The protein operates within bacterial outer membrane biogenesis; LPS lipid A biosynthesis. In terms of biological role, condensation of UDP-2,3-diacylglucosamine and 2,3-diacylglucosamine-1-phosphate to form lipid A disaccharide, a precursor of lipid A, a phosphorylated glycolipid that anchors the lipopolysaccharide to the outer membrane of the cell. The polypeptide is Lipid-A-disaccharide synthase (lpxB) (Chlamydia pneumoniae (Chlamydophila pneumoniae)).